Here is a 127-residue protein sequence, read N- to C-terminus: Small ribosomal subunit protein uS11c (127 aa).

This sequence belongs to the universal ribosomal protein uS11 family. In terms of assembly, part of the 30S ribosomal subunit.

It is found in the plastid. The protein resides in the chloroplast. The sequence is that of Small ribosomal subunit protein uS11c from Heterosigma akashiwo (strain NIES-293 / 8280G21-1).